A 2204-amino-acid polypeptide reads, in one-letter code: Non-reducing polyketide synthase CTB1 (2204 aa).

Positions 11–250 (AFGDQTYDCS…TRLPITAPYH (240 aa)) are N-terminal acylcarrier protein transacylase domain (SAT). Residues 382–815 (KSPIAILAAS…GGNTCLVLED (434 aa)) form the Ketosynthase family 3 (KS3) domain. Active-site for beta-ketoacyl synthase activity residues include cysteine 554, histidine 689, and histidine 734. Residues 923 to 1224 (AFTGQGSAFE…QTFASINKDK (302 aa)) are malonyl-CoA:ACP transacylase (MAT) domain. Residues 1299 to 1619 (SSSIHKVITN…VPKRLMHYIV (321 aa)) form a product template (PT) domain region. The segment at 1303–1439 (HKVITNTITA…CKIRFGSLEK (137 aa)) is N-terminal hotdog fold. In terms of domain architecture, PKS/mFAS DH spans 1303-1616 (HKVITNTITA…LQGVPKRLMH (314 aa)). The Proton acceptor; for dehydratase activity role is filled by histidine 1336. The tract at residues 1468–1616 (TYRFSKGMIY…LQGVPKRLMH (149 aa)) is C-terminal hotdog fold. Residue aspartate 1528 is the Proton donor; for dehydratase activity of the active site. Positions 1625–1674 (KASGPPTEKKGSSPPVEKKASAPVAPTRPAIQRKNASIPPPATQVTPQNK) are disordered. The segment covering 1631 to 1644 (TEKKGSSPPVEKKA) has biased composition (basic and acidic residues). Carrier domains are found at residues 1679 to 1756 (PSVS…TRLS) and 1783 to 1865 (DPSP…SGST). O-(pantetheine 4'-phosphoryl)serine is present on residues serine 1716 and serine 1824. The segment covering 1864–1875 (STESFDSTTTKP) has biased composition (polar residues). Residues 1864-1931 (STESFDSTTT…PPKGRIPPAW (68 aa)) are disordered. A compositionally biased stretch (low complexity) spans 1880 to 1895 (ATPPLTDSSASSPPSS). Residues 1945–2195 (ILFLFPDGAG…SGAQMLVEHM (251 aa)) form a thioesterase (TE) domain region.

Requires pantetheine 4'-phosphate as cofactor.

It carries out the reaction 6 malonyl-CoA + acetyl-CoA + 6 H(+) = nor-toralactone + 6 CO2 + 7 CoA + 2 H2O. It functions in the pathway mycotoxin biosynthesis. In terms of biological role, polyketide synthase; part of the gene cluster that mediates the biosynthesis of cercosporin, a light-activated, non-host-selective toxin. The perylenequinone chromophore of cercosporin absorbs light energy to attain an electronically-activated triplet state and produces active oxygen species such as the hydroxyl radical, superoxide, hydrogen peroxide or singlet oxygen upon reaction with oxygen molecules. These reactive oxygen species cause damage to various cellular components including lipids, proteins and nucleic acids. The first step of cercosporin biosynthesis is performed by the polyketide synthase CTB1 which catalyzes the formation of nor-toralactone. The starter unit acyltransferase (SAT) domain of CTB1 initiates polyketide extension by the selective utilization of acetyl-CoA, which is elongated to the heptaketide in the beta-ketoacyl synthase (KS) domain by successive condensations with six malonyl units introduced by the malonyl acyltransferase (MAT) domain. The product template (PT) domain catalyzes C4-C9 and C2-C11 aldol cyclizations and dehydrations to a trihydroxynaphthalene, which is thought to be delivered to the thioesterase (TE) domain for product release. The bifunctional enzyme CTB3 then methylates nor-toralactone to toralactone before conducting an unusual oxidative aromatic ring opening. The O-methyltransferase CTB2 further methylates the nascent OH-6 of the CBT3 product, blocking further oxidation at this site before the reductase CTB6 reduces the 2-oxopropyl ketone at position C7, giving naphthalene. The FAD-dependent monooxygenase CTB5 in concert with the multicopper oxidase CTB12 are responsible for homodimerization of naphthalene with CTB7 installing the dioxepine moiety, finally producing cercosporin. The fasciclin domain-containing protein CTB11 might act with CTB5 and CTB12 whereas the roles of CTB9 and CTB10 have still to be elucidated. The protein is Non-reducing polyketide synthase CTB1 of Cercospora beticola (Sugarbeet leaf spot fungus).